The primary structure comprises 203 residues: Glycerol-3-phosphate acyltransferase 1 (203 aa).

The next 6 membrane-spanning stretches (helical) occupy residues 2–22 (LNFF…SHII), 52–72 (GFPA…FFVW), 82–102 (VIAF…FLKF), 117–137 (VLTK…FSIL), 150–168 (EDAF…YTMW), and 170–190 (VFNG…IVFY).

The protein belongs to the PlsY family. Probably interacts with PlsX.

It localises to the cell inner membrane. It catalyses the reaction an acyl phosphate + sn-glycerol 3-phosphate = a 1-acyl-sn-glycero-3-phosphate + phosphate. It participates in lipid metabolism; phospholipid metabolism. Catalyzes the transfer of an acyl group from acyl-phosphate (acyl-PO(4)) to glycerol-3-phosphate (G3P) to form lysophosphatidic acid (LPA). This enzyme utilizes acyl-phosphate as fatty acyl donor, but not acyl-CoA or acyl-ACP. The sequence is that of Glycerol-3-phosphate acyltransferase 1 from Thermotoga maritima (strain ATCC 43589 / DSM 3109 / JCM 10099 / NBRC 100826 / MSB8).